Here is a 125-residue protein sequence, read N- to C-terminus: Large ribosomal subunit protein bL21 (125 aa).

This sequence belongs to the bacterial ribosomal protein bL21 family. In terms of assembly, part of the 50S ribosomal subunit. Contacts protein L20.

Its function is as follows. This protein binds to 23S rRNA in the presence of protein L20. The protein is Large ribosomal subunit protein bL21 of Synechococcus sp. (strain CC9902).